Consider the following 756-residue polypeptide: Photosystem I P700 chlorophyll a apoprotein A1 (756 aa).

A run of 8 helical transmembrane segments spans residues 73–96, 159–182, 198–222, 298–316, 353–376, 392–418, 440–462, and 537–555; these read IFSAHFGHLAVIFVWLSGMYFHGA, LYVTAIGGLVMAGLMLFAGWFHYH, MNHHLAGLLGLGSLGWAGHQIHVSL, TAHHHLAIAVLFIIAGHMY, WHAQLAINLAMMGSLSIIVAHHMY, LSLFTHHMWIGGFLIVGGAAHGAIYMV, AIISHLNWVCIFLGFHSFGLYIH, and FLVHHIHAFTIHVTVLILL. [4Fe-4S] cluster contacts are provided by cysteine 579 and cysteine 588. 2 consecutive transmembrane segments (helical) span residues 595–616 and 670–692; these read HVFLGLFWMYNSLSIVIFHFSW and LSAYGLLFLGAHFVWAFSLMFLF. Histidine 681 lines the chlorophyll a' pocket. Positions 689 and 697 each coordinate chlorophyll a. Tryptophan 698 lines the phylloquinone pocket. A helical transmembrane segment spans residues 730–750; it reads AVGVAHYLLGGIATTWAFFLA.

The protein belongs to the PsaA/PsaB family. In terms of assembly, the PsaA/B heterodimer binds the P700 chlorophyll special pair and subsequent electron acceptors. PSI consists of a core antenna complex that captures photons, and an electron transfer chain that converts photonic excitation into a charge separation. The cyanobacterial PSI reaction center is composed of one copy each of PsaA,B,C,D,E,F,I,J,K,L,M and X, and forms trimeric complexes. The cofactor is PSI electron transfer chain: 5 chlorophyll a, 1 chlorophyll a', 2 phylloquinones and 3 4Fe-4S clusters. PSI core antenna: 90 chlorophyll a, 22 carotenoids, 3 phospholipids and 1 galactolipid. P700 is a chlorophyll a/chlorophyll a' dimer, A0 is one or more chlorophyll a, A1 is one or both phylloquinones and FX is a shared 4Fe-4S iron-sulfur center..

Its subcellular location is the cellular thylakoid membrane. The enzyme catalyses reduced [plastocyanin] + hnu + oxidized [2Fe-2S]-[ferredoxin] = oxidized [plastocyanin] + reduced [2Fe-2S]-[ferredoxin]. In terms of biological role, psaA and PsaB bind P700, the primary electron donor of photosystem I (PSI), as well as the electron acceptors A0, A1 and FX. PSI is a plastocyanin/cytochrome c6-ferredoxin oxidoreductase, converting photonic excitation into a charge separation, which transfers an electron from the donor P700 chlorophyll pair to the spectroscopically characterized acceptors A0, A1, FX, FA and FB in turn. Oxidized P700 is reduced on the lumenal side of the thylakoid membrane by plastocyanin or cytochrome c6. This Cyanothece sp. (strain PCC 7425 / ATCC 29141) protein is Photosystem I P700 chlorophyll a apoprotein A1.